The following is a 35-amino-acid chain: Putative gastric cancer-related gene 224 protein (35 aa).

Expressed in gastric mucosa.

The polypeptide is Putative gastric cancer-related gene 224 protein (GCRG224) (Homo sapiens (Human)).